The primary structure comprises 819 residues: uncharacterized protein (819 aa).

S16 is subject to Phosphoserine. 2 disordered regions span residues S28–V83 and P96–I134. Positions K36–Y63 form a DNA-binding region, zn(2)-C6 fungal-type. Polar residues-rich tracts occupy residues T64 to P77 and P96 to I118.

Its subcellular location is the nucleus. This is an uncharacterized protein from Schizosaccharomyces pombe (strain 972 / ATCC 24843) (Fission yeast).